The sequence spans 312 residues: Acetylglutamate kinase (312 aa).

Residues 69–70, Arg91, and Asn191 contribute to the substrate site; that span reads GG.

Belongs to the acetylglutamate kinase family. ArgB subfamily.

It is found in the cytoplasm. It carries out the reaction N-acetyl-L-glutamate + ATP = N-acetyl-L-glutamyl 5-phosphate + ADP. It participates in amino-acid biosynthesis; L-arginine biosynthesis; N(2)-acetyl-L-ornithine from L-glutamate: step 2/4. In terms of biological role, catalyzes the ATP-dependent phosphorylation of N-acetyl-L-glutamate. This Streptomyces griseus subsp. griseus (strain JCM 4626 / CBS 651.72 / NBRC 13350 / KCC S-0626 / ISP 5235) protein is Acetylglutamate kinase.